Consider the following 506-residue polypeptide: Kynurenine 3-monooxygenase (506 aa).

Belongs to the aromatic-ring hydroxylase family. KMO subfamily. It depends on FAD as a cofactor.

It is found in the mitochondrion outer membrane. It carries out the reaction L-kynurenine + NADPH + O2 + H(+) = 3-hydroxy-L-kynurenine + NADP(+) + H2O. The protein operates within cofactor biosynthesis; NAD(+) biosynthesis; quinolinate from L-kynurenine: step 1/3. Its function is as follows. Catalyzes the hydroxylation of L-kynurenine (L-Kyn) to form 3-hydroxy-L-kynurenine (L-3OHKyn). Required for synthesis of quinolinic acid. This is Kynurenine 3-monooxygenase (bna4) from Emericella nidulans (strain FGSC A4 / ATCC 38163 / CBS 112.46 / NRRL 194 / M139) (Aspergillus nidulans).